A 267-amino-acid chain; its full sequence is Undecaprenyl-diphosphatase (267 aa).

The next 7 helical transmembrane spans lie at 1 to 21 (MTLWQAFILSLIQGITEFLPI), 39 to 59 (AGVAFDAFTGLGTLTAVLFYY), 85 to 105 (AKLGNQLIVATLPALLIGFMV), 117 to 137 (LLIASTTMIFAIFLAAADFWG), 189 to 209 (FSFLQSIPISAAAGGYGLWKL), 220 to 240 (LIALSYVTATLAAYVCIALFI), and 246 to 266 (VGMMPHVIYRLLLGAYLFFVF).

It belongs to the UppP family.

Its subcellular location is the cell inner membrane. It carries out the reaction di-trans,octa-cis-undecaprenyl diphosphate + H2O = di-trans,octa-cis-undecaprenyl phosphate + phosphate + H(+). Catalyzes the dephosphorylation of undecaprenyl diphosphate (UPP). Confers resistance to bacitracin. This chain is Undecaprenyl-diphosphatase, found in Dichelobacter nodosus (strain VCS1703A).